The sequence spans 1402 residues: Erbin (1402 aa).

LRR repeat units lie at residues 23–44 (TVTT…IFTF), 47–68 (TLEE…LFNC), 70–91 (SLHK…IANL), 93–114 (NLRE…IKNC), 116–137 (VLTI…FSQL), 139–161 (NLTQ…GRLT), 162–183 (KLQI…MNRL), 185–206 (QLER…LEQL), 208–229 (GLRE…IGSL), 231–252 (QLTY…ISTC), 254–275 (NLQD…IGSL), 277–298 (NVTT…IGGL), 300–321 (SIEE…IGQL), 323–344 (NMRT…IGNW), 346–367 (NITV…MGDM), 369–391 (KLKV…TKLQ), and 392–413 (QLTA…QKET). Phosphoserine is present on residues serine 440 and serine 444. 2 disordered regions span residues 465–489 (DEDK…PYPD) and 507–543 (DEET…TTKS). Residues 470-480 (EREAPPREGNL) are compositionally biased toward basic and acidic residues. Tyrosine 483 carries the post-translational modification Phosphotyrosine. Residue threonine 485 is modified to Phosphothreonine. Residues 507–534 (DEETNEESGRDLKQHEDQQVVNKDKCVK) are compositionally biased toward basic and acidic residues. Phosphoserine occurs at positions 595, 599, 600, and 617. Positions 629-638 (NKKDDAKDAD) are enriched in basic and acidic residues. The segment at 629–694 (NKKDDAKDAD…PVDSNSKVRQ (66 aa)) is disordered. Residues 647 to 659 (NSNQNNSNCSSPS) are compositionally biased toward low complexity. The segment covering 660-689 (RMSDSVSLNTDSSQDTSLCSPVKQTPVDSN) has biased composition (polar residues). Serine 712, serine 849, serine 854, and serine 869 each carry phosphoserine. Residues 824–864 (EDTAPSPGRVEPQKASSSADVGISKSTEDLSPQRSGPTGAV) form a disordered region. A Phosphothreonine modification is found at threonine 914. The residue at position 917 (tyrosine 917) is a Phosphotyrosine. Position 928 is a phosphoserine (serine 928). Tyrosine 970 is subject to Phosphotyrosine. 2 disordered regions span residues 990 to 1018 (WHPK…ENHS) and 1070 to 1093 (TTIQ…TRRT). A compositionally biased stretch (polar residues) spans 1070 to 1084 (TTIQRQSSVSSTASV). A Phosphotyrosine modification is found at tyrosine 1097. 3 disordered regions span residues 1107–1187 (GRTP…VPHD), 1198–1217 (AKKL…CQDD), and 1222–1274 (EEQN…VARH). Composition is skewed to polar residues over residues 1128–1139 (GPNTSRPQSARP) and 1149–1164 (MSVS…PSKR). A phosphoserine mark is found at serine 1150 and serine 1171. Leucine 1231, arginine 1234, and serine 1276 each carry phosphoserine. The PDZ domain occupies 1311 to 1400 (EIRVRVEKDP…AVDLIIVREV (90 aa)).

It belongs to the LAP (LRR and PDZ) protein family. In terms of assembly, interacts with ERBB2, BPAG1 and ITGB4. May favor the localization of ERBB2, by restricting its presence to the basolateral membrane of epithelial cells. Also found to interact with ARVCF and delta catenin. Interacts (via C-terminus) with DST (via N-terminus). Interacts with NOD2 (via CARD domain). Isoform 2 is phosphorylated on Ser-1231 and Ser-1234.

The protein resides in the cell junction. It localises to the hemidesmosome. The protein localises to the nucleus membrane. Its subcellular location is the basolateral cell membrane. Acts as an adapter for the receptor ERBB2, in epithelia. By binding the unphosphorylated ERBB2 'Tyr-1248' receptor, it may contribute to stabilize this unphosphorylated state. Inhibits NOD2-dependent NF-kappa-B signaling and pro-inflammatory cytokine secretion. This is Erbin from Mus musculus (Mouse).